Consider the following 282-residue polypeptide: MKKLLEGKTPANEIKENLIEEIKKLKSDGINPTLCVIEVGDDPASKIYLRVKRNLAKKVGIKEIGLHFPANTSQAELLEKIEDLNQDPSINGIMVQLPVPPQIDPRAIFETIAPEKDADGFSPLNLGRLWEGQSDVIPATVRSILTLIDYYGIEMAGKNTVIIGRSVIVGKPLAAVLVERDATVTIAHSKTKNLSELTKNADVIISDVGKAHLVTEDMVKEGAVIIDVGMNRENGKLMGDVDFDMVAPKAKAITPVPGGVGPLTVASLMKQAVILTRKQHGR.

Residues 164-166 (GRS) and serine 189 each bind NADP(+).

This sequence belongs to the tetrahydrofolate dehydrogenase/cyclohydrolase family. As to quaternary structure, homodimer.

It carries out the reaction (6R)-5,10-methylene-5,6,7,8-tetrahydrofolate + NADP(+) = (6R)-5,10-methenyltetrahydrofolate + NADPH. The enzyme catalyses (6R)-5,10-methenyltetrahydrofolate + H2O = (6R)-10-formyltetrahydrofolate + H(+). The protein operates within one-carbon metabolism; tetrahydrofolate interconversion. In terms of biological role, catalyzes the oxidation of 5,10-methylenetetrahydrofolate to 5,10-methenyltetrahydrofolate and then the hydrolysis of 5,10-methenyltetrahydrofolate to 10-formyltetrahydrofolate. The polypeptide is Bifunctional protein FolD 2 (Lactobacillus johnsonii (strain CNCM I-12250 / La1 / NCC 533)).